The chain runs to 258 residues: Ribosomal RNA small subunit methyltransferase A (258 aa).

S-adenosyl-L-methionine contacts are provided by Asn-12, Leu-14, Gly-38, Glu-59, Asp-83, and Asn-100.

Belongs to the class I-like SAM-binding methyltransferase superfamily. rRNA adenine N(6)-methyltransferase family. RsmA subfamily.

The protein localises to the cytoplasm. It carries out the reaction adenosine(1518)/adenosine(1519) in 16S rRNA + 4 S-adenosyl-L-methionine = N(6)-dimethyladenosine(1518)/N(6)-dimethyladenosine(1519) in 16S rRNA + 4 S-adenosyl-L-homocysteine + 4 H(+). Specifically dimethylates two adjacent adenosines (A1518 and A1519) in the loop of a conserved hairpin near the 3'-end of 16S rRNA in the 30S particle. May play a critical role in biogenesis of 30S subunits. The chain is Ribosomal RNA small subunit methyltransferase A from Metamycoplasma arthritidis (strain 158L3-1) (Mycoplasma arthritidis).